Reading from the N-terminus, the 59-residue chain is Gallinacin-14 (59 aa).

An N-terminal signal peptide occupies residues 1-18 (MGIFLLFLVLLAVPQAAP). 3 disulfides stabilise this stretch: Cys25–Cys54, Cys32–Cys47, and Cys37–Cys55.

It belongs to the beta-defensin family.

The protein resides in the secreted. The protein localises to the cytoplasmic granule. In terms of biological role, has bactericidal activity. The chain is Gallinacin-14 (GAL14) from Gallus gallus (Chicken).